Consider the following 455-residue polypeptide: DNA repair protein RadA (455 aa).

The C4-type zinc-finger motif lies at 11 to 28; that stretch reads CVGCGYVHPKWLGRCPEC. Residue 97–104 coordinates ATP; sequence GEPGIGKS. The RadA KNRFG motif signature appears at 250-254; that stretch reads KNRFG. The segment at 350–455 is lon-protease-like; sequence DIYVNVAGGI…IAEIFSKAKA (106 aa).

The protein belongs to the RecA family. RadA subfamily.

DNA-dependent ATPase involved in processing of recombination intermediates, plays a role in repairing DNA breaks. Stimulates the branch migration of RecA-mediated strand transfer reactions, allowing the 3' invading strand to extend heteroduplex DNA faster. Binds ssDNA in the presence of ADP but not other nucleotides, has ATPase activity that is stimulated by ssDNA and various branched DNA structures, but inhibited by SSB. Does not have RecA's homology-searching function. In Treponema pallidum (strain Nichols), this protein is DNA repair protein RadA.